The primary structure comprises 619 residues: MRGTRKYQHVIETPDPGKWELAGYEESLPISEKSNPMTRELDKADPSQLVQLLRDCDAEIFQEEDENLIHYHRLYSESVLKTMGDVAKRVQEVLKNPDDSLVVLSGCGTSGRLALLLANSFNGLLKGLHKTPCYCYIMSGGDRSIVTSQESSEDNPQLGAQELEKVCEGKKNVLFIGISCGLSAPFIAGQLDFCMRHLDVYLPVLVGFNPVSMARNERIEGWHSSFRQVAERLQTLHDSQKGFILNPAVGPEGVSGSSRMKGGSATKILLETLLLVAHKAESNVPVTEKCLLEILRTYERAHKVTYSQSKKIAALMKQTATSLQKKGHLYILGWGTLGLVGIMDAVECVPTYQADWRDVRGFITGGYHSIENKEGDLSSLGPQFSISHEDFVKNVLPSVSETDTVLLIFTLDDDLNQIEKLVALVKEKTSNIQVICHATAGQYLPNSLKKTIPSIIGLTWPILFLEYEGAFIQKFQRELSTKWILDTVTSGAYTLRGKIFRNFMVDFKINNSKLFHRATSVLQRLTGQSHQRCTEVLLQSIYGEQTLSEQIRNTTIAGHVEAAASQDKVLPVAIVSLLRSCTIQDSRSRINSSLSIRSAIESSMNVPGRKRGAEDSESR.

SIS domains lie at V90–N283 and T319–K498. Residue C107–T109 participates in keto-D-fructose 6-phosphate binding. Residues T109–S110, E153, S179–G181, and E347 contribute to the beta-D-fructose 1-phosphate site. Keto-D-fructose 6-phosphate-binding positions include S179–S183 and E347. An essential for interaction with GCK region spans residues I462–F464. K513 is a keto-D-fructose 6-phosphate binding site. Residue K513 coordinates beta-D-fructose 1-phosphate.

It belongs to the GCKR family. As to quaternary structure, interacts (fructose 6-phosphate bound form) with gck.

The protein localises to the nucleus. It is found in the cytoplasm. Its subcellular location is the mitochondrion. Its function is as follows. Regulates glucokinase (gck) by forming an inactive complex with this enzyme. The affinity of gckr for gck is modulated by fructose metabolites: gckr with bound fructose 6-phosphate has increased affinity for gck, while gckr with bound fructose 1-phosphate has strongly decreased affinity for gck and does not inhibit gck activity. This is Glucokinase regulatory protein from Xenopus laevis (African clawed frog).